A 337-amino-acid chain; its full sequence is Ketol-acid reductoisomerase (NADP(+)) (337 aa).

In terms of domain architecture, KARI N-terminal Rossmann spans 3 to 183 (VEMFYDADAD…GGARAGVIKT (181 aa)). Residues 26 to 29 (YGSQ), lysine 49, serine 52, serine 54, and 84 to 87 (DTAQ) contribute to the NADP(+) site. Histidine 109 is an active-site residue. Glycine 135 lines the NADP(+) pocket. A KARI C-terminal knotted domain is found at 184-329 (TFKDETETDL…KKLRDLMSWV (146 aa)). Mg(2+) is bound by residues aspartate 192, glutamate 196, glutamate 228, and glutamate 232. Serine 253 serves as a coordination point for substrate.

It belongs to the ketol-acid reductoisomerase family. The cofactor is Mg(2+).

The catalysed reaction is (2R)-2,3-dihydroxy-3-methylbutanoate + NADP(+) = (2S)-2-acetolactate + NADPH + H(+). It catalyses the reaction (2R,3R)-2,3-dihydroxy-3-methylpentanoate + NADP(+) = (S)-2-ethyl-2-hydroxy-3-oxobutanoate + NADPH + H(+). It functions in the pathway amino-acid biosynthesis; L-isoleucine biosynthesis; L-isoleucine from 2-oxobutanoate: step 2/4. It participates in amino-acid biosynthesis; L-valine biosynthesis; L-valine from pyruvate: step 2/4. Functionally, involved in the biosynthesis of branched-chain amino acids (BCAA). Catalyzes an alkyl-migration followed by a ketol-acid reduction of (S)-2-acetolactate (S2AL) to yield (R)-2,3-dihydroxy-isovalerate. In the isomerase reaction, S2AL is rearranged via a Mg-dependent methyl migration to produce 3-hydroxy-3-methyl-2-ketobutyrate (HMKB). In the reductase reaction, this 2-ketoacid undergoes a metal-dependent reduction by NADPH to yield (R)-2,3-dihydroxy-isovalerate. The chain is Ketol-acid reductoisomerase (NADP(+)) from Mycolicibacterium gilvum (strain PYR-GCK) (Mycobacterium gilvum (strain PYR-GCK)).